The following is a 665-amino-acid chain: MAGLSGAQIPDGEFTAVVYRLIRNARYAEAVQLLGGELQRSPRSRAGLSLLGYCYYRLQEFALAAECYEQLGQLHPELEQYRLYQAQALYKACLYAEATRVAFLLLDNPAYHSRVLRLQAAIKYSEGDLPGSRSLVEQLPSREGGEESGGENETDGQINLGCLLYKEGQYEAACSKFFAALQASGYQPDLSYNLALAYYSSRQYASALKHIAEIIERGIRQHPELGVGMTTEGIDVRSVGNTLVLHQTALVEAFNLKAAIEYQLRNYEAAQEALTDMPPRAEEELDPVTLHNQALMNMDARPTEGFEKLQFLLQQNPFPPETFGNLLLLYCKYEYFDLAADVLAENAHLIYKFLTPYLYDFLDAVITCQTAPEEAFIKLDGLAGMLTEVLRKLTIQVQEARHNRDDEAIKKAVNEYDETMEKYIPVLMAQAKIYWNLENYPMVEKIFRKSVEFCNDHDVWKLNVAHVLFMQENKYKEAIGFYEPIVKKHYDNILNVSAIVLANLCVSYIMTSQNEEAEELMRKIEKEEEQLSYDDPDKKMYHLCIVNLVIGTLYCAKGNYDFGISRVIKSLEPYNKKLGTDTWYYAKRCFLSLLENMSKHTIMLRDSVIQECVQFLEHCELHGRNIPAVIEQPLEEERMHVGKNTVTYESRQLKALIYEIIGWNI.

TPR repeat units follow at residues 11–44, 45–78, 154–187, 189–221, 393–424, 425–457, and 459–492; these read DGEF…SPRS, RAGL…HPEL, TDGQ…SGYQ, DLSY…GIRQ, LTIQ…EKYI, PVLM…CNDH, and VWKL…HYDN. A disordered region spans residues 130 to 154; the sequence is PGSRSLVEQLPSREGGEESGGENET. Positions 508 to 535 form a coiled coil; that stretch reads YIMTSQNEEAEELMRKIEKEEEQLSYDD. A TPR 8 repeat occupies 544–577; the sequence is CIVNLVIGTLYCAKGNYDFGISRVIKSLEPYNKK.

The protein belongs to the TTC30/dfy-1/fleer family. Interacts with the IFT B complex components IFT27, IFT46, IFT74, IFT52, IFT57, IFT80, IFT81 and IFT88. Interacts with KIF17.

It localises to the cell projection. The protein localises to the cilium. Required for polyglutamylation of axonemal tubulin. Plays a role in anterograde intraflagellar transport (IFT), the process by which cilia precursors are transported from the base of the cilium to the site of their incorporation at the tip. In Homo sapiens (Human), this protein is Intraflagellar transport protein 70B.